The following is a 78-amino-acid chain: Delta-conotoxin-like Ai6.1 (78 aa).

Residues 1-22 form the signal peptide; that stretch reads MKLTCVMIVAVLFLTAWTFATA. Residues 23 to 49 constitute a propeptide that is removed on maturation; sequence DDPRNGLGNLFSNAHHEMKNPEASKLN. Disulfide bonds link Cys53/Cys68, Cys60/Cys72, and Cys67/Cys77.

This sequence belongs to the conotoxin O1 superfamily. In terms of tissue distribution, expressed by the venom duct.

Its subcellular location is the secreted. Delta-conotoxins bind to site 6 of voltage-gated sodium channels (Nav) and inhibit the inactivation process. The protein is Delta-conotoxin-like Ai6.1 of Conus ammiralis (Admiral cone).